Here is a 263-residue protein sequence, read N- to C-terminus: 3-methyl-2-oxobutanoate hydroxymethyltransferase (263 aa).

Mg(2+) contacts are provided by Asp45 and Asp84. Residues 45 to 46 (DS), Asp84, and Lys113 each bind 3-methyl-2-oxobutanoate. Glu115 serves as a coordination point for Mg(2+). The active-site Proton acceptor is Glu182.

Belongs to the PanB family. As to quaternary structure, homodecamer; pentamer of dimers. Mg(2+) is required as a cofactor.

It is found in the cytoplasm. It catalyses the reaction 3-methyl-2-oxobutanoate + (6R)-5,10-methylene-5,6,7,8-tetrahydrofolate + H2O = 2-dehydropantoate + (6S)-5,6,7,8-tetrahydrofolate. The protein operates within cofactor biosynthesis; coenzyme A biosynthesis. Its function is as follows. Catalyzes the reversible reaction in which hydroxymethyl group from 5,10-methylenetetrahydrofolate is transferred onto alpha-ketoisovalerate to form ketopantoate. The protein is 3-methyl-2-oxobutanoate hydroxymethyltransferase of Ignicoccus hospitalis (strain KIN4/I / DSM 18386 / JCM 14125).